The primary structure comprises 494 residues: V-type proton ATPase subunit B (494 aa).

The protein belongs to the ATPase alpha/beta chains family. In terms of assembly, V-ATPase is a heteromultimeric enzyme composed of a peripheral catalytic V1 complex (main components: subunits A, B, C, D, E, and F) attached to an integral membrane V0 proton pore complex (main component: the proteolipid protein).

Non-catalytic subunit of the peripheral V1 complex of vacuolar ATPase. V-ATPase is responsible for acidifying a variety of intracellular compartments in eukaryotic cells. This chain is V-type proton ATPase subunit B (VAPB), found in Plasmodium falciparum.